We begin with the raw amino-acid sequence, 187 residues long: Elongation factor P (187 aa).

This sequence belongs to the elongation factor P family.

The protein localises to the cytoplasm. It participates in protein biosynthesis; polypeptide chain elongation. In terms of biological role, involved in peptide bond synthesis. Stimulates efficient translation and peptide-bond synthesis on native or reconstituted 70S ribosomes in vitro. Probably functions indirectly by altering the affinity of the ribosome for aminoacyl-tRNA, thus increasing their reactivity as acceptors for peptidyl transferase. The polypeptide is Elongation factor P (Chelativorans sp. (strain BNC1)).